Here is a 230-residue protein sequence, read N- to C-terminus: Iron-dependent repressor IdeR (230 aa).

Residues 4–65 (LVDTTEMYLR…VAGNRHLELT (62 aa)) form the HTH dtxR-type domain.

This sequence belongs to the DtxR/MntR family. As to quaternary structure, homodimer.

It localises to the cytoplasm. Metal-dependent DNA-binding protein that controls transcription of many genes involved in iron metabolism. This is Iron-dependent repressor IdeR (ideR) from Mycobacterium leprae (strain TN).